We begin with the raw amino-acid sequence, 47 residues long: Small, acid-soluble spore protein N (47 aa).

The interval 1–47 (MSNPKRSPNHFAPNHIGTQPRAAGGNKGKQMQDQSGQHAQVIQTKGE) is disordered. Positions 29 to 47 (KQMQDQSGQHAQVIQTKGE) are enriched in polar residues.

It belongs to the SspN family.

Its subcellular location is the spore core. This is Small, acid-soluble spore protein N from Geobacillus thermodenitrificans (strain NG80-2).